We begin with the raw amino-acid sequence, 225 residues long: NAD(P)H-hydrate epimerase (225 aa).

Positions 9–209 constitute a YjeF N-terminal domain; the sequence is MQTIDNYTVE…DIGLLTPQDF (201 aa). 57–61 provides a ligand contact to (6S)-NADPHX; the sequence is NNGAD. K(+)-binding residues include Asn58 and Asp119. (6S)-NADPHX is bound by residues 123–129 and Asp152; that span reads GTGLNNL. Position 155 (Thr155) interacts with K(+).

This sequence belongs to the NnrE/AIBP family. K(+) serves as cofactor.

The catalysed reaction is (6R)-NADHX = (6S)-NADHX. The enzyme catalyses (6R)-NADPHX = (6S)-NADPHX. In terms of biological role, catalyzes the epimerization of the S- and R-forms of NAD(P)HX, a damaged form of NAD(P)H that is a result of enzymatic or heat-dependent hydration. This is a prerequisite for the S-specific NAD(P)H-hydrate dehydratase to allow the repair of both epimers of NAD(P)HX. This Leuconostoc sp. (strain C2) protein is NAD(P)H-hydrate epimerase.